A 608-amino-acid chain; its full sequence is Serine/arginine repetitive matrix protein 4 (608 aa).

2 disordered regions span residues 34–246 (ASIT…PLPR) and 261–608 (SAAD…STRR). Basic and acidic residues predominate over residues 78–100 (GREKACRELDPARAHSASQDRDP). 2 stretches are compositionally biased toward basic residues: residues 107-123 (RGKK…RRRS) and 131-187 (VKKK…HRCP). Residues 188–200 (SRSQSSELRSPSC) are compositionally biased toward low complexity. Basic and acidic residues predominate over residues 201 to 213 (ESRHRGRSPEEGR). Residues 214 to 228 (KSRRTHSRRCSKNHC) show a composition bias toward basic residues. The segment covering 289 to 299 (TSSPPSTQTSS) has biased composition (low complexity). Residues 322–339 (CGNTSDSGNSFTTSSPQN) show a composition bias toward polar residues. Composition is skewed to low complexity over residues 389–420 (RSSS…SRST) and 428–459 (SRSP…SRYS). Residues 460-477 (PSRERDLKYGEKEPQPRE) show a composition bias toward basic and acidic residues. Residues 478–494 (RARRRRRSYSPMRKRRR) show a composition bias toward basic residues. The span at 495–504 (DSPSHLEARR) shows a compositional bias: basic and acidic residues. The span at 518-555 (PSPSSSSSLSSASSWYSSSSSSSSSSSRSPSRSYSRSR) shows a compositional bias: low complexity. Residues 556-573 (SPSRSHSSRSQTRSRTRT) are compositionally biased toward basic residues. Residues 574–608 (SRSSSSRSLSLGSRSRSRNRSLSYSSAESYASTRR) are compositionally biased toward low complexity.

It belongs to the nSR100 family. Phosphorylated. Specifically expressed in neuronal cells (at protein level). Expressed in adult nervous system and sensory organ tissues.

The protein localises to the nucleus. Splicing factor specifically required for neural cell differentiation. Acts in conjunction with nPTB/PTBP2 by binding directly to its regulated target transcripts and promotes neural-specific exon inclusion in many genes that function in neural cell differentiation. Required to promote the inclusion of neural-specific exon 10 in nPTB/PTBP2, leading to increased expression of neural-specific nPTB/PTBP2. Also promotes the inclusion of exon 16 in DAAM1 in neuron extracts. Promotes alternative splicing of REST transcripts to produce REST isoform 2 (REST4) with greatly reduced repressive activity, thereby activating expression of REST targets in neural cells. Plays an important role during embryonic development as well as in the proper functioning of the adult nervous system. Regulates alternative splicing events in genes with important neuronal functions. This Mus musculus (Mouse) protein is Serine/arginine repetitive matrix protein 4 (Srrm4).